The primary structure comprises 183 residues: Gamma-crystallin N (183 aa).

Beta/gamma crystallin 'Greek key' domains lie at 6–46 (GKII…RVET), 47–89 (GAWI…KPVR), 95–136 (YRLE…KVYG), and 138–180 (GAWV…RRVV).

The protein belongs to the beta/gamma-crystallin family. Monomer.

Its function is as follows. Crystallins are the dominant structural components of the vertebrate eye lens. In Xenopus tropicalis (Western clawed frog), this protein is Gamma-crystallin N (crygn).